Consider the following 59-residue polypeptide: UPF0434 protein PBPRA2383 (59 aa).

It belongs to the UPF0434 family.

The protein is UPF0434 protein PBPRA2383 of Photobacterium profundum (strain SS9).